Reading from the N-terminus, the 681-residue chain is Structure-specific endonuclease subunit SLX4 (681 aa).

Disordered stretches follow at residues 239-305 and 505-528; these read EREK…QEQL and EVTGEAEDGPSIIQVPSSPGNENL. The span at 251–261 shows a compositional bias: polar residues; that stretch reads SDSSPEPTQLL. The span at 265-281 shows a compositional bias: acidic residues; it reads IIEEEHEVDEEEEDNEN. Composition is skewed to polar residues over residues 288–305 and 518–528; these read QLASSPTQISSDDTQEQL and QVPSSPGNENL.

This sequence belongs to the SLX4 family. Forms a heterodimer with SLX1. Phosphorylated in response to DNA damage.

It is found in the nucleus. Regulatory subunit of the SLX1-SLX4 structure-specific endonuclease that resolves DNA secondary structures generated during DNA repair and recombination. Has endonuclease activity towards branched DNA substrates, introducing single-strand cuts in duplex DNA close to junctions with ss-DNA. The polypeptide is Structure-specific endonuclease subunit SLX4 (Meyerozyma guilliermondii (strain ATCC 6260 / CBS 566 / DSM 6381 / JCM 1539 / NBRC 10279 / NRRL Y-324) (Yeast)).